We begin with the raw amino-acid sequence, 127 residues long: Holo-[acyl-carrier-protein] synthase (127 aa).

Mg(2+) is bound by residues aspartate 9 and glutamate 58.

Belongs to the P-Pant transferase superfamily. AcpS family. It depends on Mg(2+) as a cofactor.

It is found in the cytoplasm. The enzyme catalyses apo-[ACP] + CoA = holo-[ACP] + adenosine 3',5'-bisphosphate + H(+). In terms of biological role, transfers the 4'-phosphopantetheine moiety from coenzyme A to a Ser of acyl-carrier-protein. This chain is Holo-[acyl-carrier-protein] synthase, found in Shewanella baltica (strain OS155 / ATCC BAA-1091).